The sequence spans 276 residues: Large ribosomal subunit protein uL2 (276 aa).

Positions 223 to 276 are disordered; the sequence is GVAMNPVDHPHGGGEGRGKGHHPTSPWGLPTKGYKTRRGKRPSDKFIVRRRNEA. Composition is skewed to basic and acidic residues over residues 230 to 240 and 263 to 276; these read DHPHGGGEGRG and RPSDKFIVRRRNEA.

It belongs to the universal ribosomal protein uL2 family. Part of the 50S ribosomal subunit. Forms a bridge to the 30S subunit in the 70S ribosome.

Its function is as follows. One of the primary rRNA binding proteins. Required for association of the 30S and 50S subunits to form the 70S ribosome, for tRNA binding and peptide bond formation. It has been suggested to have peptidyltransferase activity; this is somewhat controversial. Makes several contacts with the 16S rRNA in the 70S ribosome. This Thermotoga petrophila (strain ATCC BAA-488 / DSM 13995 / JCM 10881 / RKU-1) protein is Large ribosomal subunit protein uL2.